Here is a 445-residue protein sequence, read N- to C-terminus: Alpha-1,3-mannosyl-glycoprotein 2-beta-N-acetylglucosaminyltransferase (445 aa).

The Cytoplasmic segment spans residues M1 to S6. The helical; Signal-anchor for type II membrane protein transmembrane segment at A7 to W29 threads the bilayer. The Lumenal portion of the chain corresponds to T30–N445. Residues C113 and C143 are joined by a disulfide bond. Positions 115, 142, 188, and 210 each coordinate substrate. D211 contacts Mn(2+). C237 and C303 are disulfide-bonded. D289 (proton acceptor) is an active-site residue. Residue S320 coordinates substrate.

It belongs to the glycosyltransferase 13 family. As to quaternary structure, interacts with MGAT4D. Interacts with BRI3 (isoforms 1 and 2); the interaction with isoform 2 is weaker than with isoform 1. Mn(2+) serves as cofactor.

Its subcellular location is the golgi apparatus membrane. It is found in the cytoplasm. The protein resides in the perinuclear region. The enzyme catalyses N(4)-(alpha-D-Man-(1-&gt;3)-[alpha-D-Man-(1-&gt;3)-[alpha-D-Man-(1-&gt;6)]-alpha-D-Man-(1-&gt;6)]-beta-D-Man-(1-&gt;4)-beta-D-GlcNAc-(1-&gt;4)-beta-D-GlcNAc)-L-asparaginyl-[protein] (N-glucan mannose isomer 5A1,2) + UDP-N-acetyl-alpha-D-glucosamine = N(4)-{beta-D-GlcNAc-(1-&gt;2)-alpha-D-Man-(1-&gt;3)-[alpha-D-Man-(1-&gt;3)-[alpha-D-Man-(1-&gt;6)]-alpha-D-Man-(1-&gt;6)]-beta-D-Man-(1-&gt;4)-beta-D-GlcNAc-(1-&gt;4)-beta-D-GlcNAc}-L-asparaginyl-[protein] + UDP + H(+). It functions in the pathway protein modification; protein glycosylation. Its function is as follows. Initiates complex N-linked carbohydrate formation. Essential for the conversion of high-mannose to hybrid and complex N-glycans. The protein is Alpha-1,3-mannosyl-glycoprotein 2-beta-N-acetylglucosaminyltransferase (MGAT1) of Homo sapiens (Human).